Here is a 365-residue protein sequence, read N- to C-terminus: Mannonate dehydratase 1 (365 aa).

The protein belongs to the mannonate dehydratase family. Requires Fe(2+) as cofactor. Mn(2+) serves as cofactor.

The catalysed reaction is D-mannonate = 2-dehydro-3-deoxy-D-gluconate + H2O. It functions in the pathway carbohydrate metabolism; pentose and glucuronate interconversion. Functionally, catalyzes the dehydration of D-mannonate. The sequence is that of Mannonate dehydratase 1 from Bacillus licheniformis (strain ATCC 14580 / DSM 13 / JCM 2505 / CCUG 7422 / NBRC 12200 / NCIMB 9375 / NCTC 10341 / NRRL NRS-1264 / Gibson 46).